The following is a 621-amino-acid chain: GPI-anchor transamidase component GPAA1 (621 aa).

Topologically, residues 1 to 19 (MGLLSDPVRRRALARIVLR) are cytoplasmic. The helical transmembrane segment at 20–41 (LNTPLCVLSYVAGIAWFLALAF) threads the bilayer. Residues 42 to 370 (PPLTQRTYMS…LLPALSRFVS (329 aa)) are Lumenal-facing. Y49 and S51 together coordinate a 2-acyl-6-[6-phosphoethanolamine-alpha-D-mannosyl-(1-&gt;2)-6-phosphoethanolamine-alpha-D-mannosyl-(1-&gt;6)-2-phosphoethanolamine-alpha-D-mannosyl-(1-&gt;4)-alpha-D-glucosaminyl]-1-(1-radyl,2-acyl-sn-glycero-3-phospho)-1D-myo-inositol. N203 carries N-linked (GlcNAc...) asparagine glycosylation. An intrachain disulfide couples C259 to C266. The a 2-acyl-6-[6-phosphoethanolamine-alpha-D-mannosyl-(1-&gt;2)-6-phosphoethanolamine-alpha-D-mannosyl-(1-&gt;6)-2-phosphoethanolamine-alpha-D-mannosyl-(1-&gt;4)-alpha-D-glucosaminyl]-1-(1-radyl,2-acyl-sn-glycero-3-phospho)-1D-myo-inositol site is built by H354, Q355, and S356. Q355 lines the Mg(2+) pocket. The helical transmembrane segment at 371–393 (IGLYMPATGFLLLVLGLKALELW) threads the bilayer. The Cytoplasmic portion of the chain corresponds to 394–425 (MQLHQAGVNPEEAGKAPSPGTPLLPTQGVGLA). A helical transmembrane segment spans residues 426–450 (SLTAPLLISQAMGLALYFLPVLGQH). Over 451–462 (LATQHFPVAEAE) the chain is Lumenal. Residues 463-483 (AVVLTLLAIYVAGLALPHNTH) traverse the membrane as a helical segment. Residues 484–495 (RVVNSQVPDRGW) are Cytoplasmic-facing. Helical transmembrane passes span 496 to 519 (MALK…LNFS) and 520 to 536 (LGFL…ALAK). Residues 537–540 (PHGP) lie on the Cytoplasmic side of the membrane. The helical transmembrane segment at 541-563 (RTLYAALLVVTSPAVTLFGSLFL) threads the bilayer. At 564–597 (WRELLEVPLSLAEGWQLFLTALAQGVLEHYTYGA) the chain is on the lumenal side. The helical transmembrane segment at 598 to 619 (LLFPILALGLYPCWLLFWNVLF) threads the bilayer. At 620–621 (WK) the chain is on the cytoplasmic side.

Heteropentamer. Part of the GPI-anchor transamidase complex, consisting of PIGK, PIGT, PIGS, PIGU and GAA1. Interacts with PIGK. Ubiquitously expressed in fetal and adult tissues. Expressed at higher levels in fetal tissues than adult tissues. In embryos abundant in the choroid plexus, skeletal muscle,.

Its subcellular location is the endoplasmic reticulum membrane. The protein operates within glycolipid biosynthesis; glycosylphosphatidylinositol-anchor biosynthesis. Its function is as follows. Component of the glycosylphosphatidylinositol-anchor (GPI-anchor) transamidase (GPI-T) complex that catalyzes the formation of the linkage between a proprotein and a GPI-anchor and participates in GPI anchored protein biosynthesis. Binds GPI-anchor. The polypeptide is GPI-anchor transamidase component GPAA1 (Mus musculus (Mouse)).